The primary structure comprises 211 residues: Large ribosomal subunit protein uL3 (211 aa).

The disordered stretch occupies residues Gly125–Gly148.

The protein belongs to the universal ribosomal protein uL3 family. In terms of assembly, part of the 50S ribosomal subunit. Forms a cluster with proteins L14 and L19. Also contacts proteins L13 and L17.

One of the primary rRNA binding proteins, it binds directly near the 3'-end of the 23S rRNA, where it nucleates assembly of the 50S subunit. The sequence is that of Large ribosomal subunit protein uL3 (rplC) from Deinococcus radiodurans (strain ATCC 13939 / DSM 20539 / JCM 16871 / CCUG 27074 / LMG 4051 / NBRC 15346 / NCIMB 9279 / VKM B-1422 / R1).